The following is an 814-amino-acid chain: Origin of replication complex subunit 1 (814 aa).

The segment covering 1 to 15 has biased composition (polar residues); that stretch reads MDLSATPSRSKSGLR. Positions 1 to 127 are disordered; sequence MDLSATPSRS…PKKPKKRAYY (127 aa). Low complexity-rich tracts occupy residues 51–62 and 69–80; these read APMSPVTPSSVR and ETPTKVTSETPV. The Nuclear localization signal motif lies at 105–112; sequence PKRQRQRQ. Residues 108–127 show a composition bias toward basic residues; that stretch reads QRQRQRQRQQPKKPKKRAYY. Positions 157-181 are histone H3 binding; it reads DPEAEECRVCFRAGAAVMVECDVCL. Residues 160–209 form a PHD-type zinc finger; sequence AEECRVCFRAGAAVMVECDVCLGGFHLRCVRPPLRRVPEGDWACPYCEAE. The Zn(2+) site is built by C163, C166, C177, C180, H185, and C188. A histone H3 binding region spans residues 197 to 201; it reads PEGDW. Residues C203 and C206 each contribute to the Zn(2+) site. Residues 218–335 enclose the BAH domain; sequence PKPPEGKRIV…IHWHNFKRLA (118 aa). The segment at 310–315 is histone H3 binding; sequence ASDQGD. Acidic residues-rich tracts occupy residues 339 to 349 and 360 to 373; these read DEPETKEDPGD and SDSD…EEEE. The disordered stretch occupies residues 339–384; it reads DEPETKEDPGDEPYNAGNDYVSDSDEDSEYDEEEEPTKCSSARTHQ. The segment at 433 to 804 is necessary and sufficient for ORC complex assembly; it reads PKSLPCRDKE…DDVTFALKES (372 aa). ATP contacts are provided by residues 468-475 and 468-476; these read GVPGTGKT and GVPGTGKTM. Positions 558 and 559 each coordinate Mg(2+). E559, N592, and R657 together coordinate ATP.

This sequence belongs to the ORC1 family. In terms of assembly, component of the origin recognition complex (ORC) composed of at least ORC1, ORC2, ORC3, ORC4, ORC5 and ORC6. ORC is regulated in a cell-cycle and development dependent manner. It is sequentially assembled at the exit from anaphase of mitosis and disassembled as cells enter S phase. Binds unmodified and methylated histone H3. As to expression, expressed strongly in root tips and shoot apical meristem (SAM), and weakly in young leaves. Not detected in mature leaves.

The protein resides in the nucleus. In terms of biological role, essential protein. Component of the origin recognition complex (ORC) that binds origins of replication. It has a role in both chromosomal replication and mating type transcriptional silencing. Binds to the ARS consensus sequence (ACS) of origins of replication. H3K4me3 effector that positively regulates the transcription of a subset of genes. Required for cell proliferation. The polypeptide is Origin of replication complex subunit 1 (Oryza sativa subsp. japonica (Rice)).